The chain runs to 201 residues: Recombination protein RecR (201 aa).

The C4-type zinc-finger motif lies at 60 to 75; it reads CSCCGNVDTSDPCTIC. The Toprim domain occupies 83–178; that stretch reads ATLIVVEDVS…RVTRLAHGVP (96 aa).

The protein belongs to the RecR family.

Its function is as follows. May play a role in DNA repair. It seems to be involved in an RecBC-independent recombinational process of DNA repair. It may act with RecF and RecO. This chain is Recombination protein RecR, found in Brucella melitensis biotype 2 (strain ATCC 23457).